The chain runs to 383 residues: Acetylornithine deacetylase (383 aa).

Residue H80 participates in Zn(2+) binding. Residue D82 is part of the active site. Zn(2+) is bound at residue D112. Residue E144 is part of the active site. Zn(2+) is bound by residues E145, E169, and H355.

The protein belongs to the peptidase M20A family. ArgE subfamily. In terms of assembly, homodimer. Zn(2+) serves as cofactor. Requires Co(2+) as cofactor. The cofactor is glutathione.

The protein resides in the cytoplasm. It catalyses the reaction N(2)-acetyl-L-ornithine + H2O = L-ornithine + acetate. Its pathway is amino-acid biosynthesis; L-arginine biosynthesis; L-ornithine from N(2)-acetyl-L-ornithine (linear): step 1/1. Functionally, catalyzes the hydrolysis of the amide bond of N(2)-acetylated L-amino acids. Cleaves the acetyl group from N-acetyl-L-ornithine to form L-ornithine, an intermediate in L-arginine biosynthesis pathway, and a branchpoint in the synthesis of polyamines. The polypeptide is Acetylornithine deacetylase (Shigella flexneri).